Consider the following 65-residue polypeptide: Large ribosomal subunit protein uL29 (65 aa).

This sequence belongs to the universal ribosomal protein uL29 family.

This Psychrobacter arcticus (strain DSM 17307 / VKM B-2377 / 273-4) protein is Large ribosomal subunit protein uL29.